A 311-amino-acid chain; its full sequence is Metal-staphylopine import system permease protein CntB (311 aa).

The next 6 helical transmembrane spans lie at 9–29 (IALM…LTYI), 105–125 (LTII…VVSA), 139–159 (VAFF…IIYV), 173–193 (GPES…GIYF), 237–257 (IFCM…YIFA), and 274–294 (FPVI…FNTL). One can recognise an ABC transmembrane type-1 domain in the interval 99 to 295 (FMNTLKLTII…VLFIVFNTLA (197 aa)).

This sequence belongs to the binding-protein-dependent transport system permease family. As to quaternary structure, the complex is composed of two ATP-binding proteins (CntD and CntF), two transmembrane proteins (CntB and CntC) and a solute-binding protein (CntA).

The protein resides in the cell membrane. Nickel/cobalt import is reduced in the presence of zinc. Functionally, part of the ABC transporter complex CntABCDF (Opp1) involved in the uptake of metal in complex with the metallophore staphylopine (StP). Involved in the import of divalent metals ions such as nickel, cobalt and zinc. Probably responsible for the translocation of the substrate across the membrane. Plays a major role in nickel/cobalt import in zinc-depleted conditions. Contributes to virulence. Required for full urease activity in vitro. This Staphylococcus aureus (strain NCTC 8325 / PS 47) protein is Metal-staphylopine import system permease protein CntB.